The chain runs to 795 residues: Delta-1-pyrroline-5-carboxylate synthase (795 aa).

The segment at 1–361 (MLSQVYRCGF…FFSEVKPAGP (361 aa)) is glutamate 5-kinase. The substrate site is built by S117, D223, and N246. ATP is bound by residues 266 to 267 (SD) and 305 to 311 (MGGMEAK). An N6-succinyllysine mark is found at K311, K347, and K550. A gamma-glutamyl phosphate reductase region spans residues 362-795 (TVEQQGEMAR…NLPIPQRNTN (434 aa)).

In the N-terminal section; belongs to the glutamate 5-kinase family. The protein in the C-terminal section; belongs to the gamma-glutamyl phosphate reductase family. As to quaternary structure, can form homodimers/multimers.

It localises to the mitochondrion. Its subcellular location is the mitochondrion matrix. The enzyme catalyses L-glutamate + ATP = L-glutamyl 5-phosphate + ADP. It carries out the reaction L-glutamate 5-semialdehyde + phosphate + NADP(+) = L-glutamyl 5-phosphate + NADPH + H(+). Its pathway is amino-acid biosynthesis; L-proline biosynthesis; L-glutamate 5-semialdehyde from L-glutamate: step 1/2. It functions in the pathway amino-acid biosynthesis; L-proline biosynthesis; L-glutamate 5-semialdehyde from L-glutamate: step 2/2. With respect to regulation, isoform Short: Inhibited by L-ornithine with a Ki of approximately 0.25 mm. Isoform Long: Insensitive to ornithine inhibition. This is due to the two amino acid insert which abolishes feedback inhibition of P5CS activity by L-ornithine. Its function is as follows. Bifunctional enzyme that converts glutamate to glutamate 5-semialdehyde, an intermediate in the biosynthesis of proline, ornithine and arginine. This is Delta-1-pyrroline-5-carboxylate synthase (ALDH18A1) from Homo sapiens (Human).